The following is a 254-amino-acid chain: L-rhamnose 1-dehydrogenase (NADP(+)) (254 aa).

Positions 13, 15, 16, 18, 64, and 91 each coordinate NADP(+). The active-site Proton donor is the Ser144. The beta-L-rhamnose site is built by Ser144, Ser146, Gln154, and Tyr157. Positions 157 and 161 each coordinate NADP(+). The Proton acceptor role is filled by Tyr157. Residue Lys161 is the Lowers pKa of active site Tyr of the active site. Thr189 serves as a coordination point for beta-L-rhamnose. NADP(+) is bound at residue Ile190. Residue Asn195 coordinates beta-L-rhamnose.

This sequence belongs to the short-chain dehydrogenases/reductases (SDR) family.

It carries out the reaction L-rhamnofuranose + NADP(+) = L-rhamnono-1,4-lactone + NADPH + H(+). Its pathway is carbohydrate degradation; L-rhamnose degradation. Functionally, involved in the non-phosphorylated metabolic pathway of L-rhamnose catabolism. Catalyzes the oxidation of L-rhamnose to yield L-rhamnono-1,4-lactone. It can also oxidize L-lyxose and L-mannose, and uses only NADP. This is L-rhamnose 1-dehydrogenase (NADP(+)) from Thermoplasma acidophilum (strain ATCC 25905 / DSM 1728 / JCM 9062 / NBRC 15155 / AMRC-C165).